Reading from the N-terminus, the 854-residue chain is Nucleolar MIF4G domain-containing protein 1 (854 aa).

Positions 2-275 (PRNVPEVNGV…EEDPDWQVLQ (274 aa)) are necessary for nucleolar localization and for targeting PPP1CA to the nucleolus. Ser60 is subject to Phosphoserine. 2 disordered regions span residues 66 to 215 (ESRS…PLSF) and 231 to 333 (SGGG…GEKY). Basic residues predominate over residues 76–99 (PGGRKSRKELRKEKRHLRKARRLQ). Residues 104–113 (SGSGDQGGNV) show a composition bias toward gly residues. A compositionally biased stretch (low complexity) spans 128-173 (VRPTPAKATATPAKASAPSTNTKASAAQPKAKAKGAPGKPGPATAT). A compositionally biased stretch (basic and acidic residues) spans 188–197 (REIRKLERCL). The segment covering 265-280 (SEEDPDWQVLQEDQED) has biased composition (acidic residues). 3 stretches are compositionally biased toward basic and acidic residues: residues 281 to 291 (VNSKRRGEAES), 303 to 315 (RFAE…RSSS), and 322 to 331 (QESHSVESGE). The Required for efficient binding to PPP1CA and for targeting PPP1CA to the nucleolus signature appears at 301-304 (KVRF). Ser311, Ser314, and Ser315 each carry phosphoserine. The MIF4G domain maps to 356–553 (KKHVKGLINR…ETMLALKNND (198 aa)). The region spanning 648–764 (DVRRIIFCTL…PLSVLKVVEF (117 aa)) is the MI domain.

The protein belongs to the CWC22 family. As to quaternary structure, may interact with EIF4A1, EIF4A2 and EIF4A3. Interacts with PPP1CA and PPP1CC.

The protein localises to the nucleus. It is found in the nucleolus. Plays a role in targeting PPP1CA to the nucleolus. This Mus musculus (Mouse) protein is Nucleolar MIF4G domain-containing protein 1 (Nom1).